A 416-amino-acid chain; its full sequence is Serine hydroxymethyltransferase (416 aa).

Residues L117 and 121 to 123 (GHL) each bind (6S)-5,6,7,8-tetrahydrofolate. At K226 the chain carries N6-(pyridoxal phosphate)lysine.

It belongs to the SHMT family. Homodimer. Pyridoxal 5'-phosphate serves as cofactor.

The protein resides in the cytoplasm. The catalysed reaction is (6R)-5,10-methylene-5,6,7,8-tetrahydrofolate + glycine + H2O = (6S)-5,6,7,8-tetrahydrofolate + L-serine. It participates in one-carbon metabolism; tetrahydrofolate interconversion. It functions in the pathway amino-acid biosynthesis; glycine biosynthesis; glycine from L-serine: step 1/1. In terms of biological role, catalyzes the reversible interconversion of serine and glycine with tetrahydrofolate (THF) serving as the one-carbon carrier. This reaction serves as the major source of one-carbon groups required for the biosynthesis of purines, thymidylate, methionine, and other important biomolecules. Also exhibits THF-independent aldolase activity toward beta-hydroxyamino acids, producing glycine and aldehydes, via a retro-aldol mechanism. The protein is Serine hydroxymethyltransferase of Leptospira biflexa serovar Patoc (strain Patoc 1 / Ames).